The chain runs to 523 residues: Cytidine and dCMP deaminase domain-containing protein 1 (523 aa).

Over residues methionine 1–glutamate 11 the composition is skewed to polar residues. Disordered stretches follow at residues methionine 1 to threonine 27 and glutamine 55 to threonine 81. A CMP/dCMP-type deaminase 1 domain is found at glycine 71–glutamate 169. Zn(2+)-binding residues include histidine 110, cysteine 135, and cysteine 138. Residues asparagine 272–leucine 284 carry the Nuclear export signal motif. Residues glutamate 318 to aspartate 483 form the CMP/dCMP-type deaminase 2 domain. Residue histidine 399 coordinates Zn(2+). Residue glutamate 401 is the Proton donor of the active site. Residues cysteine 427 and cysteine 430 each coordinate Zn(2+). Positions glutamate 478–glutamine 523 are disordered. Over residues glutamate 486 to serine 516 the composition is skewed to basic and acidic residues. A Bipartite nuclear localization signal motif is present at residues arginine 489–arginine 511.

The protein belongs to the cytidine and deoxycytidylate deaminase family. Zn(2+) serves as cofactor.

Its subcellular location is the cytoplasm. It is found in the nucleus. The catalysed reaction is 2'-deoxycytidine + H2O + H(+) = 2'-deoxyuridine + NH4(+). The enzyme catalyses cytidine + H2O + H(+) = uridine + NH4(+). Functionally, catalyzes the deamination of cytidine and deoxycytidine into uridine and deoxyuridine, respectively. May play an important role in testicular development and spermatogenesis. The sequence is that of Cytidine and dCMP deaminase domain-containing protein 1 (Cdadc1) from Mus musculus (Mouse).